The primary structure comprises 1148 residues: Minor outer capsid protein P2 (1148 aa).

The 219-residue stretch at 930–1148 (QDGTANIFQK…QYIQSIYDEL (219 aa)) folds into the PPPDE domain. Active-site residues include His-954 and Cys-1111.

The protein belongs to the phytoreovirus minor outer capsid protein P2 family.

It localises to the virion. The protein localises to the host cytoplasm. Its function is as follows. Minor capsid protein present in the outer capsid, which is required for adsorption of the virus onto host insect cells. This chain is Minor outer capsid protein P2, found in Nephotettix cincticeps (Green rice leafhopper).